We begin with the raw amino-acid sequence, 975 residues long: Ionotropic receptor 21a (975 aa).

The N-terminal stretch at 1–21 (MFKRIVLAVINLVFLIVSTTA) is a signal peptide. Residues N67, N177, and N355 are each glycosylated (N-linked (GlcNAc...) asparagine). The chain crosses the membrane as a helical span at residues 433–453 (WPVWVAVILIYLLAIFPLAFS). N464 carries an N-linked (GlcNAc...) asparagine glycan. Residues 505 to 525 (IYWVFTIIITACYTGSIIAFI) traverse the membrane as a helical segment. 3 N-linked (GlcNAc...) asparagine glycosylation sites follow: N561, N586, and N611. The chain crosses the membrane as a helical span at residues 708–728 (MFLLMLFGYVVALGVLISEWV). Disordered stretches follow at residues 757–839 (ATAG…HSLS) and 911–938 (SPHS…RKEM). Composition is skewed to polar residues over residues 760 to 777 (GSDN…TNRN) and 788 to 800 (VENS…NGSA). N-linked (GlcNAc...) asparagine glycosylation is found at N763 and N797.

It belongs to the glutamate-gated ion channel (TC 1.A.10.1) family. In both female and male antenna, expressed specifically in 3 sensory neurons of flagellomere 13 segment (at protein level).

It is found in the cell projection. The protein localises to the cilium membrane. Functionally, integral part of a neural sensory system in the antenna that provides the neural basis for the response to environmental changes in temperature (thermosensation). Specifically, required for thermosensing by the cooling cell. Plays a role in heat seeking and heat-stimulated blood feeding behavior. The chain is Ionotropic receptor 21a from Anopheles gambiae (African malaria mosquito).